We begin with the raw amino-acid sequence, 187 residues long: Elongation factor P (187 aa).

It belongs to the elongation factor P family.

It is found in the cytoplasm. Its pathway is protein biosynthesis; polypeptide chain elongation. Involved in peptide bond synthesis. Stimulates efficient translation and peptide-bond synthesis on native or reconstituted 70S ribosomes in vitro. Probably functions indirectly by altering the affinity of the ribosome for aminoacyl-tRNA, thus increasing their reactivity as acceptors for peptidyl transferase. The chain is Elongation factor P from Mycobacteroides abscessus (strain ATCC 19977 / DSM 44196 / CCUG 20993 / CIP 104536 / JCM 13569 / NCTC 13031 / TMC 1543 / L948) (Mycobacterium abscessus).